Reading from the N-terminus, the 62-residue chain is UPF0291 protein CLJ_B2839 (62 aa).

It belongs to the UPF0291 family.

The protein localises to the cytoplasm. In Clostridium botulinum (strain 657 / Type Ba4), this protein is UPF0291 protein CLJ_B2839.